Consider the following 314-residue polypeptide: Putative glycosyltransferase ORF31 (314 aa).

It belongs to the glycosyltransferase group 1 family.

The chain is Putative glycosyltransferase ORF31 from Haloarcula hispanica (His1V).